Consider the following 438-residue polypeptide: Putative hydrolase MSMEG_3995/MSMEI_3903 (438 aa).

Residues aspartate 95, aspartate 104, glutamate 143, and histidine 208 each contribute to the Zn(2+) site. Lysine 217 participates in a covalent cross-link: Isoglutamyl lysine isopeptide (Lys-Gln) (interchain with Q-Cter in protein Pup). Histidine 400 contributes to the Zn(2+) binding site.

The protein belongs to the peptidase M20 family. Zn(2+) is required as a cofactor.

The chain is Putative hydrolase MSMEG_3995/MSMEI_3903 from Mycolicibacterium smegmatis (strain ATCC 700084 / mc(2)155) (Mycobacterium smegmatis).